Consider the following 141-residue polypeptide: MPTPSMEDYIEQIYILIEEKGYARVSDIAEALSVHPSSVTKMVQKLDKDEYLVYEKYRGLVLTPKGKKIGQRLVYRHELLEQFLRLIGVNEENIYHDVEGIEHHLSWNAIDRIGDLVQYFQEDERRIEALRNIQKRNEQGE.

The HTH dtxR-type domain maps to 1–63 (MPTPSMEDYI…YEKYRGLVLT (63 aa)). Residues Asp-8, Glu-11, His-77, Glu-99, Glu-102, and His-103 each coordinate Mn(2+).

The protein belongs to the DtxR/MntR family. As to quaternary structure, homodimer.

The protein resides in the cytoplasm. DNA binding is strongly activated by Mn(2+). Functionally, central regulator of manganese homeostasis. The sequence is that of HTH-type transcriptional regulator MntR from Geobacillus thermodenitrificans (strain NG80-2).